The following is a 911-amino-acid chain: Protein translocase subunit SecA (911 aa).

Residues Q90, 108–112 (GEGKT), and D515 each bind ATP. Residues C891, C893, C902, and H903 each coordinate Zn(2+).

The protein belongs to the SecA family. Monomer and homodimer. Part of the essential Sec protein translocation apparatus which comprises SecA, SecYEG and auxiliary proteins SecDF-YajC and YidC. Zn(2+) serves as cofactor.

Its subcellular location is the cell inner membrane. It is found in the cytoplasm. It carries out the reaction ATP + H2O + cellular proteinSide 1 = ADP + phosphate + cellular proteinSide 2.. Part of the Sec protein translocase complex. Interacts with the SecYEG preprotein conducting channel. Has a central role in coupling the hydrolysis of ATP to the transfer of proteins into and across the cell membrane, serving both as a receptor for the preprotein-SecB complex and as an ATP-driven molecular motor driving the stepwise translocation of polypeptide chains across the membrane. This chain is Protein translocase subunit SecA, found in Blochmanniella pennsylvanica (strain BPEN).